We begin with the raw amino-acid sequence, 39 residues long: GVDKEGCRYLLGACTIDDDCCLHLGCNKKYGHCGWDGTF.

Cystine bridges form between cysteine 7-cysteine 21, cysteine 14-cysteine 26, and cysteine 20-cysteine 33. Phenylalanine amide is present on phenylalanine 39.

The protein belongs to the neurotoxin 10 (Hwtx-1) family. 47 subfamily. Expressed by the venom gland.

Its subcellular location is the secreted. In terms of biological role, insecticidal toxin that acts, at least partially, by inhibiting insect voltage-gated sodium (NaV) channels of several insect species. The toxin binds to the voltage sensor in NaV channel domain II and inhibits channel opening by shifting the threshold for channel activation to more positive voltages. The toxin binding is sensitive to residues in the S1-S2 loop of the domain II voltage sensor. In vivo, the recombinant toxin causes paralysis and/or death to two dipteran species (Lucilia cuprina and Drosophila melanogaster). In contrast, the toxin does not show paralytic or lethal effect on the cotton bollworm Helicoverpa armigera and the triatomine bug Rhodinius prolixus. The sequence is that of Mu-theraphotoxin-Ae1a from Augacephalus ezendami (Mozambique baboon spider).